We begin with the raw amino-acid sequence, 824 residues long: Tuftelin-interacting protein 11 (824 aa).

Residues 1–135 (MSMSHLYGKD…RTFAGGIKSN (135 aa)) form a disordered region. The span at 11 to 25 (EDSDGVEMENFEITD) shows a compositional bias: acidic residues. Composition is skewed to basic and acidic residues over residues 41–61 (QTKE…DERP) and 85–114 (PAAE…EAKK). Polar residues predominate over residues 122 to 135 (KPSQRTFAGGIKSN). The 47-residue stretch at 145–191 (TKGIGQKLLQKMGYMPGRGLGKNAQGIIAPIEAKQRRGKGAVGAYGS) folds into the G-patch domain.

The protein belongs to the TFP11/STIP family. As to quaternary structure, identified in the spliceosome C complex.

It is found in the nucleus. Involved in pre-mRNA splicing, specifically in spliceosome disassembly during late-stage splicing events. In Xenopus laevis (African clawed frog), this protein is Tuftelin-interacting protein 11 (tfip11).